The sequence spans 79 residues: Virulence protein MsgA (79 aa).

Belongs to the DinI family.

Its function is as follows. Affects survival in macrophages. The polypeptide is Virulence protein MsgA (msgA) (Salmonella typhi).